Consider the following 473-residue polypeptide: Glucose facilitated diffusion protein (473 aa).

The Cytoplasmic segment spans residues methionine 1 to leucine 13. The helical transmembrane segment at alanine 14–isoleucine 34 threads the bilayer. The Periplasmic segment spans residues glycine 35–methionine 59. Residues valine 60–isoleucine 80 traverse the membrane as a helical segment. The Cytoplasmic portion of the chain corresponds to arginine 81–arginine 85. Residues glycine 86–glutamate 106 traverse the membrane as a helical segment. The Periplasmic segment spans residues lysine 107–glycine 112. Residues glycine 113–valine 133 form a helical membrane-spanning segment. At serine 134–glutamine 158 the chain is on the cytoplasmic side. The helical transmembrane segment at methionine 159–glycine 179 threads the bilayer. The Periplasmic portion of the chain corresponds to serine 180–serine 187. A helical transmembrane segment spans residues glycine 188–leucine 208. Topologically, residues threonine 209 to serine 257 are cytoplasmic. Residues serine 258–phenylalanine 278 form a helical membrane-spanning segment. Topologically, residues glutamine 279 to aspartate 303 are periplasmic. A helical membrane pass occupies residues threonine 304 to serine 324. Over arginine 325–leucine 335 the chain is Cytoplasmic. A helical membrane pass occupies residues leucine 336–phenylalanine 356. Topologically, residues lysine 357–serine 366 are periplasmic. The chain crosses the membrane as a helical span at residues valine 367 to serine 387. Over glutamate 388–glycine 396 the chain is Cytoplasmic. Residues alanine 397–phenylalanine 417 form a helical membrane-spanning segment. The Periplasmic portion of the chain corresponds to lysine 418 to threonine 429. A helical membrane pass occupies residues phenylalanine 430 to valine 450. Residues alanine 451–lysine 473 are Cytoplasmic-facing.

It belongs to the major facilitator superfamily. Sugar transporter (TC 2.A.1.1) family.

The protein localises to the cell inner membrane. Allows uptake of glucose by the cell; allows growth on glucose minimal medium by E.coli cells impaired in glucose transport. Also transports fructose, but has a strong preference for glucose. The polypeptide is Glucose facilitated diffusion protein (Zymomonas mobilis subsp. mobilis (strain ATCC 31821 / ZM4 / CP4)).